A 123-amino-acid chain; its full sequence is Large ribosomal subunit protein bL12 (123 aa).

It belongs to the bacterial ribosomal protein bL12 family. As to quaternary structure, homodimer. Part of the ribosomal stalk of the 50S ribosomal subunit. Forms a multimeric L10(L12)X complex, where L10 forms an elongated spine to which 2 to 4 L12 dimers bind in a sequential fashion. Binds GTP-bound translation factors.

Forms part of the ribosomal stalk which helps the ribosome interact with GTP-bound translation factors. Is thus essential for accurate translation. The polypeptide is Large ribosomal subunit protein bL12 (Cytophaga hutchinsonii (strain ATCC 33406 / DSM 1761 / CIP 103989 / NBRC 15051 / NCIMB 9469 / D465)).